The sequence spans 306 residues: Protein FdhE homolog (306 aa).

It belongs to the FdhE family.

It is found in the cytoplasm. Necessary for formate dehydrogenase activity. In Proteus mirabilis (strain HI4320), this protein is Protein FdhE homolog.